The following is a 1028-amino-acid chain: MRGFMSKDGNLDTSEFDTLANKEYTAEQKQTLEQGQKEFLSQTTTPELEADDGFIVTSASFAQSTPSMSALSGNISPDSQTSDPITKAVRETIIQPQKDNLIEQILKDLAALTDRDLAEQKRKEIEEEKEKDKTLSTFFGNPANREFIDKALDNPELKKKLESIEIAGYKNVHNTFSAASGYPGGFKPVQWENHVSASDLRATVVKNDAGDELCTLNETTVKTKPFTLAKQDGTQVQISSYREIDFPIKLDKADGSMHLSMVALKADGTKPSKDKAVYFTAHYEEGPNGKPQLKEISSPKPLKFAGTGDDAIAYIEHGGEIYTLAVTRGKYKEMMKEVELNQGQSVDLSQAEDIIIGQGQSKEQPLITPQQTTSSSVEPPQYKQQVPPITPTNQPLQPETSQMQQSQQVTPNLLNTATALSGSMQDLLNYVNAGLTKEIDSNKQIDLIKEAATAILNNEKSDIAEKQANIIALAENTVNNKNLKPDAKVAGVNAILETIKNDQNTPNLEKSKMLEATVAIVLNSENLESKQKQQMLEKAVDVGLSLKDDASRAATIDGIKDVVIKSNLSTEDKGTMLIAVGDKVNVSELSNAEKQKLLGSVLKKDVEAQVLSPAQQQLMQQHLDKITAEQTKKDTIKKVNDILFDPLSNTELKTTNIQAITSNVLDGPATAEVKGEIIQEITNTVAGSSLEAQDKAAIIKGVGETIATHSDTSLSLPNKALIMASAEKGIAESQTNLPDRELMTKGLVDGIYEGKGGPEITKAVSSGIDNSNINDSEKEALKKAKDAASEAALDRDTQNLTEGLKGQNIEEHKPHDDIYNKAREVINAVNPVIEALEKSKEPVVSAEDRIVQETSSILNNISKLAVEKVNNLRAMLSPNGNLKTLEEKKEESIKKVDELVKAFGTKSSTEEQQSFIKTNLIDDKTLSKEVRLQTIDKLLQEQKRAEAIENPSVKTEDVRVVSGKSKLKPISKDNPDIEKAKMVVGRDRVNIKGNIKIMGALMNARDIIQSENLNKSIPIKRESSPPQR.

Composition is skewed to polar residues over residues 359–384 (GQSK…QYKQ) and 391–400 (PTNQPLQPET). The interval 359–405 (GQSKEQPLITPQQTTSSSVEPPQYKQQVPPITPTNQPLQPETSQMQQ) is disordered.

The protein resides in the cytoplasm. This chain is Antigenic heat-stable 120 kDa protein (sca4), found in Rickettsia africae.